The primary structure comprises 270 residues: DNA repair protein RecO (270 aa).

It belongs to the RecO family.

In terms of biological role, involved in DNA repair and RecF pathway recombination. In Synechococcus sp. (strain WH7803), this protein is DNA repair protein RecO.